The chain runs to 417 residues: Gamma-glutamyl phosphate reductase (417 aa).

This sequence belongs to the gamma-glutamyl phosphate reductase family.

It localises to the cytoplasm. It carries out the reaction L-glutamate 5-semialdehyde + phosphate + NADP(+) = L-glutamyl 5-phosphate + NADPH + H(+). The protein operates within amino-acid biosynthesis; L-proline biosynthesis; L-glutamate 5-semialdehyde from L-glutamate: step 2/2. Its function is as follows. Catalyzes the NADPH-dependent reduction of L-glutamate 5-phosphate into L-glutamate 5-semialdehyde and phosphate. The product spontaneously undergoes cyclization to form 1-pyrroline-5-carboxylate. The polypeptide is Gamma-glutamyl phosphate reductase (Chlorobium phaeobacteroides (strain BS1)).